The chain runs to 197 residues: MKVLQEKILNEGKVLSGDVLKVDAFLNHQIDPVLMQEIGKEFAKRFKEENITKIVTIESSGIAPAVMAALELGVKVIFARKRKSLTLQDNMYVANVYSFTKQETNEISLSRNHIDENDRVLIIDDFLANGQAALGLMSLVEQSGASIAGIGIVIEKAFQDGGKKLREQGVRVESLAEIASLDNGTVTFVQQETAEVK.

Xanthine is bound by residues L20 and N27. Position 128–132 (A128–A132) interacts with 5-phospho-alpha-D-ribose 1-diphosphate. K156 is a binding site for xanthine.

Belongs to the purine/pyrimidine phosphoribosyltransferase family. Xpt subfamily. In terms of assembly, homodimer.

Its subcellular location is the cytoplasm. It catalyses the reaction XMP + diphosphate = xanthine + 5-phospho-alpha-D-ribose 1-diphosphate. It functions in the pathway purine metabolism; XMP biosynthesis via salvage pathway; XMP from xanthine: step 1/1. Converts the preformed base xanthine, a product of nucleic acid breakdown, to xanthosine 5'-monophosphate (XMP), so it can be reused for RNA or DNA synthesis. The chain is Xanthine phosphoribosyltransferase from Bacillus mycoides (strain KBAB4) (Bacillus weihenstephanensis).